We begin with the raw amino-acid sequence, 153 residues long: MKLVEIFTDGSCLGNPGKGGIGIVLRYNGHEKQVSKGYLQTTNNRMELRAVIEALAMLKEPCQVQLNSDSQYMKDGITKWIFSWKKNNWKTANGKPVKNKELWIALDQEIQRHKIEWTWVKGHSGHRENEICDELAKAGANNPTLEDIGYNAD.

The RNase H type-1 domain occupies 1–141 (MKLVEIFTDG…CDELAKAGAN (141 aa)). 4 residues coordinate Mg(2+): Asp9, Glu47, Asp69, and Asp133.

The protein belongs to the RNase H family. As to quaternary structure, monomer. Mg(2+) is required as a cofactor.

Its subcellular location is the cytoplasm. It catalyses the reaction Endonucleolytic cleavage to 5'-phosphomonoester.. In terms of biological role, endonuclease that specifically degrades the RNA of RNA-DNA hybrids. In Actinobacillus pleuropneumoniae serotype 5b (strain L20), this protein is Ribonuclease H.